A 544-amino-acid polypeptide reads, in one-letter code: Chaperonin GroEL (544 aa).

ATP is bound by residues 29–32 (TIGP), 86–90 (DGTTT), Gly-413, 478–480 (NAA), and Asp-494.

The protein belongs to the chaperonin (HSP60) family. As to quaternary structure, forms a cylinder of 14 subunits composed of two heptameric rings stacked back-to-back. Interacts with the co-chaperonin GroES.

The protein resides in the cytoplasm. It carries out the reaction ATP + H2O + a folded polypeptide = ADP + phosphate + an unfolded polypeptide.. Functionally, together with its co-chaperonin GroES, plays an essential role in assisting protein folding. The GroEL-GroES system forms a nano-cage that allows encapsulation of the non-native substrate proteins and provides a physical environment optimized to promote and accelerate protein folding. The sequence is that of Chaperonin GroEL from Exiguobacterium sp. (strain ATCC BAA-1283 / AT1b).